We begin with the raw amino-acid sequence, 445 residues long: Lateral flagellar hook-associated protein 2 (445 aa).

Residues 388-423 (SGAFKSRKEALQANLDRLSDKQTTLERKYDMSYKRY) adopt a coiled-coil conformation.

Belongs to the FliD family. As to quaternary structure, homopentamer.

It is found in the secreted. Its subcellular location is the bacterial flagellum. In terms of biological role, required for the morphogenesis and for the elongation of the flagellar filament by facilitating polymerization of the flagellin monomers at the tip of growing filament. Forms a capping structure, which prevents flagellin subunits (transported through the central channel of the flagellum) from leaking out without polymerization at the distal end. Essential for swarming motility. This chain is Lateral flagellar hook-associated protein 2 (fliDL), found in Vibrio parahaemolyticus serotype O3:K6 (strain RIMD 2210633).